Here is a 663-residue protein sequence, read N- to C-terminus: Probable serine/threonine-protein kinase DDB_G0283301 (663 aa).

Residues 312–586 (IERRNELGRG…EECVERLITL (275 aa)) enclose the Protein kinase domain. Residues 318–326 (LGRGGNGTV) and K348 contribute to the ATP site. Residue D440 is the Proton acceptor of the active site.

It belongs to the protein kinase superfamily. Ser/Thr protein kinase family.

The enzyme catalyses L-seryl-[protein] + ATP = O-phospho-L-seryl-[protein] + ADP + H(+). The catalysed reaction is L-threonyl-[protein] + ATP = O-phospho-L-threonyl-[protein] + ADP + H(+). This Dictyostelium discoideum (Social amoeba) protein is Probable serine/threonine-protein kinase DDB_G0283301.